Here is a 119-residue protein sequence, read N- to C-terminus: Large ribosomal subunit protein bL20 (119 aa).

Belongs to the bacterial ribosomal protein bL20 family.

Its function is as follows. Binds directly to 23S ribosomal RNA and is necessary for the in vitro assembly process of the 50S ribosomal subunit. It is not involved in the protein synthesizing functions of that subunit. In Xylella fastidiosa (strain M12), this protein is Large ribosomal subunit protein bL20.